Reading from the N-terminus, the 183-residue chain is Large ribosomal subunit protein bL32m (183 aa).

Zn(2+) is bound by residues Cys99, Cys102, Cys112, and Cys115.

It belongs to the bacterial ribosomal protein bL32 family. Component of the mitochondrial large ribosomal subunit (mt-LSU).

The protein resides in the mitochondrion. Functionally, component of the mitochondrial large ribosomal subunit (mt-LSU). The mitochondrial ribosome (mitoribosome) is a large ribonucleoprotein complex responsible for the synthesis of proteins inside mitochondria. In Caenorhabditis elegans, this protein is Large ribosomal subunit protein bL32m (mrpl-32).